Here is a 232-residue protein sequence, read N- to C-terminus: UPF0758 protein Clos_1766 (232 aa).

Residues 110–232 (KIKGPDDVSN…YFSMKEHKLI (123 aa)) form the MPN domain. Zn(2+) is bound by residues His-181, His-183, and Asp-194. Positions 181-194 (HNHPSGDPNPSGED) match the JAMM motif motif.

The protein belongs to the UPF0758 family.

In Alkaliphilus oremlandii (strain OhILAs) (Clostridium oremlandii (strain OhILAs)), this protein is UPF0758 protein Clos_1766.